A 488-amino-acid polypeptide reads, in one-letter code: Bifunctional protein HldE (488 aa).

The ribokinase stretch occupies residues 1–331 (MTELSALVER…VALHREDLTL (331 aa)). Position 206–209 (206–209 (NRKE)) interacts with ATP. Asp-276 is a catalytic residue. The segment at 358-488 (FTNGCFDLLH…TNTIKKMNGN (131 aa)) is cytidylyltransferase.

This sequence in the N-terminal section; belongs to the carbohydrate kinase PfkB family. It in the C-terminal section; belongs to the cytidylyltransferase family. Homodimer.

The catalysed reaction is D-glycero-beta-D-manno-heptose 7-phosphate + ATP = D-glycero-beta-D-manno-heptose 1,7-bisphosphate + ADP + H(+). It catalyses the reaction D-glycero-beta-D-manno-heptose 1-phosphate + ATP + H(+) = ADP-D-glycero-beta-D-manno-heptose + diphosphate. It participates in nucleotide-sugar biosynthesis; ADP-L-glycero-beta-D-manno-heptose biosynthesis; ADP-L-glycero-beta-D-manno-heptose from D-glycero-beta-D-manno-heptose 7-phosphate: step 1/4. Its pathway is nucleotide-sugar biosynthesis; ADP-L-glycero-beta-D-manno-heptose biosynthesis; ADP-L-glycero-beta-D-manno-heptose from D-glycero-beta-D-manno-heptose 7-phosphate: step 3/4. Functionally, catalyzes the phosphorylation of D-glycero-D-manno-heptose 7-phosphate at the C-1 position to selectively form D-glycero-beta-D-manno-heptose-1,7-bisphosphate. In terms of biological role, catalyzes the ADP transfer from ATP to D-glycero-beta-D-manno-heptose 1-phosphate, yielding ADP-D-glycero-beta-D-manno-heptose. The chain is Bifunctional protein HldE from Paramagnetospirillum magneticum (strain ATCC 700264 / AMB-1) (Magnetospirillum magneticum).